Reading from the N-terminus, the 132-residue chain is Small ribosomal subunit protein uS8 (132 aa).

Belongs to the universal ribosomal protein uS8 family. As to quaternary structure, part of the 30S ribosomal subunit. Contacts proteins S5 and S12.

In terms of biological role, one of the primary rRNA binding proteins, it binds directly to 16S rRNA central domain where it helps coordinate assembly of the platform of the 30S subunit. The sequence is that of Small ribosomal subunit protein uS8 from Geobacillus thermodenitrificans (strain NG80-2).